Reading from the N-terminus, the 318-residue chain is Electron transfer flavoprotein subunit alpha (318 aa).

Position 257 to 285 (257 to 285 (LYIALGISGAIQHRAGMQTSKTIVAVNKD)) interacts with FAD.

The protein belongs to the ETF alpha-subunit/FixB family. In terms of assembly, heterodimer of an alpha and a beta subunit. FAD serves as cofactor.

Functionally, the electron transfer flavoprotein serves as a specific electron acceptor for other dehydrogenases. It transfers the electrons to the main respiratory chain via ETF-ubiquinone oxidoreductase (ETF dehydrogenase). This is Electron transfer flavoprotein subunit alpha (etfA) from Mycobacterium tuberculosis (strain CDC 1551 / Oshkosh).